Consider the following 209-residue polypeptide: Ribosomal RNA large subunit methyltransferase E (209 aa).

S-adenosyl-L-methionine is bound by residues Gly63, Trp65, Asp83, Asp99, and Asp124. Residue Lys164 is the Proton acceptor of the active site.

This sequence belongs to the class I-like SAM-binding methyltransferase superfamily. RNA methyltransferase RlmE family.

Its subcellular location is the cytoplasm. It catalyses the reaction uridine(2552) in 23S rRNA + S-adenosyl-L-methionine = 2'-O-methyluridine(2552) in 23S rRNA + S-adenosyl-L-homocysteine + H(+). Functionally, specifically methylates the uridine in position 2552 of 23S rRNA at the 2'-O position of the ribose in the fully assembled 50S ribosomal subunit. This is Ribosomal RNA large subunit methyltransferase E from Serratia proteamaculans (strain 568).